The primary structure comprises 491 residues: Ketol-acid reductoisomerase (NADP(+)) (491 aa).

The KARI N-terminal Rossmann domain occupies 15–208 (AQLGKCRFMG…GGHRAGVLES (194 aa)). NADP(+) contacts are provided by residues 45–48 (CGAQ), arginine 68, arginine 76, serine 78, and 108–110 (DKQ). The active site involves histidine 132. Residue glycine 158 participates in NADP(+) binding. 2 KARI C-terminal knotted domains span residues 209–344 (SFVA…TAPQ) and 345–484 (YEGK…MTDM). Residues aspartate 217, glutamate 221, glutamate 389, and glutamate 393 each contribute to the Mg(2+) site. Serine 414 serves as a coordination point for substrate.

The protein belongs to the ketol-acid reductoisomerase family. Requires Mg(2+) as cofactor.

It catalyses the reaction (2R)-2,3-dihydroxy-3-methylbutanoate + NADP(+) = (2S)-2-acetolactate + NADPH + H(+). The enzyme catalyses (2R,3R)-2,3-dihydroxy-3-methylpentanoate + NADP(+) = (S)-2-ethyl-2-hydroxy-3-oxobutanoate + NADPH + H(+). It functions in the pathway amino-acid biosynthesis; L-isoleucine biosynthesis; L-isoleucine from 2-oxobutanoate: step 2/4. The protein operates within amino-acid biosynthesis; L-valine biosynthesis; L-valine from pyruvate: step 2/4. Its function is as follows. Involved in the biosynthesis of branched-chain amino acids (BCAA). Catalyzes an alkyl-migration followed by a ketol-acid reduction of (S)-2-acetolactate (S2AL) to yield (R)-2,3-dihydroxy-isovalerate. In the isomerase reaction, S2AL is rearranged via a Mg-dependent methyl migration to produce 3-hydroxy-3-methyl-2-ketobutyrate (HMKB). In the reductase reaction, this 2-ketoacid undergoes a metal-dependent reduction by NADPH to yield (R)-2,3-dihydroxy-isovalerate. In Escherichia fergusonii (strain ATCC 35469 / DSM 13698 / CCUG 18766 / IAM 14443 / JCM 21226 / LMG 7866 / NBRC 102419 / NCTC 12128 / CDC 0568-73), this protein is Ketol-acid reductoisomerase (NADP(+)).